A 730-amino-acid chain; its full sequence is Tubulin polyglutamylase ttll-5 (730 aa).

Residues 120 to 478 form the TTL domain; it reads RLRLTFKMMR…PLLDRKIIDS (359 aa). Residues 278-281, Lys-291, and Asp-293 each bind ATP; that span reads SRYL. The disordered stretch occupies residues 594-618; that stretch reads KKNTKNSSGSSKASSSSASASSSSS. Residues 600 to 618 show a composition bias toward low complexity; it reads SSGSSKASSSSASASSSSS.

It belongs to the tubulin--tyrosine ligase family. Expressed in body wall muscles. Not expressed in sensory neurons.

It catalyses the reaction L-glutamyl-[protein] + L-glutamate + ATP = gamma-L-glutamyl-L-glutamyl-[protein] + ADP + phosphate + H(+). Its function is as follows. Polyglutamylase which preferentially modifies alpha-tubulin. Involved in the side-chain initiation step of the polyglutamylation reaction rather than in the elongation step. Together with ttll-4 and ttll-11, required for male mating. Probably by regulating microtubule stability via the glutamylation of tubulin, negatively regulates axon regrowth after injury in PLM neurons. The polypeptide is Tubulin polyglutamylase ttll-5 (Caenorhabditis elegans).